Consider the following 289-residue polypeptide: 5'-3' exonuclease (289 aa).

The 91-residue stretch at 166-256 folds into the 5'-3' exonuclease domain; it reads VEPQKIPDYL…EEDLKIKRPD (91 aa).

Functionally, 5'-3' exonuclease acting preferentially on double-stranded DNA. The chain is 5'-3' exonuclease from Aquifex aeolicus (strain VF5).